A 208-amino-acid polypeptide reads, in one-letter code: MKVVTFGGHFHHFREIYDVLHHDVVIVDDNHLDGVTENTFDNVNITHYKTNVDDNKNVSIAKTLIYIYSTVNDDVIVLDSDVYVPIRDKPLPNSPTIFCIPAVNWGNKKYVLYCDSTNVFVPRLYLNPLVDMLELYLKGDIDMPIDTYQSRYTIAFNKIVVPGTFHYLPSSPGDYANTKKWVVTSDDILSVNIANTWYSMLPCDYVLK.

This is an uncharacterized protein from Acidianus sp. F28 (AFV-2).